A 301-amino-acid polypeptide reads, in one-letter code: tRNA dimethylallyltransferase (301 aa).

Residue 9 to 16 (GPTASGKS) coordinates ATP. 11-16 (TASGKS) contributes to the substrate binding site. Residues 34–37 (DSMQ) are interaction with substrate tRNA.

It belongs to the IPP transferase family. Monomer. It depends on Mg(2+) as a cofactor.

It catalyses the reaction adenosine(37) in tRNA + dimethylallyl diphosphate = N(6)-dimethylallyladenosine(37) in tRNA + diphosphate. Its function is as follows. Catalyzes the transfer of a dimethylallyl group onto the adenine at position 37 in tRNAs that read codons beginning with uridine, leading to the formation of N6-(dimethylallyl)adenosine (i(6)A). The polypeptide is tRNA dimethylallyltransferase (Corynebacterium glutamicum (strain R)).